The sequence spans 2371 residues: NBAS subunit of NRZ tethering complex (2371 aa).

The tract at residues 1–1035 is interaction with USE1; the sequence is MAAPESGPAL…KTEATTKLHD (1035 aa). WD repeat units follow at residues 130–169 and 316–355; these read DPKPQWRRVAWSYDCTLLAYAESTGTVRVFDLMGSELFVI and QEQDGIFKMSLSPDGMLLAAIHFSGKLSIWAIPSLKQQGE. A phosphoserine mark is found at S473 and S475. The tract at residues 1036 to 2371 is interaction with ZW10 and RINT1; the sequence is MVDQLEQILS…TALRAAQHWV (1336 aa). An N6-acetyllysine modification is found at K1057.

Component of the NRZ complex composed of NBAS, ZW10 and RINT1/TIP20L; NRZ associates with SNAREs STX18, USE1, BNIP1/SEC20L and SEC22B (the assembly has been described as syntaxin 18 complex); links NRZ to SNARE USE1. In terms of tissue distribution, broadly expressed, with highest levels in heart and skeletal muscle, and lowest levels in liver, small intestine and thymus. Well expressed in retinal ganglion cells, epidermal skin cells, and leukocytes. Up-regulated together with N-myc in some neuroblastoma cell lines.

The protein localises to the cytoplasm. It localises to the endoplasmic reticulum. Its subcellular location is the endoplasmic reticulum membrane. In terms of biological role, involved in Golgi-to-endoplasmic reticulum (ER) retrograde transport; the function is proposed to depend on its association in the NRZ complex which is believed to play a role in SNARE assembly at the ER. Required for normal embryonic development. May play a role in the nonsense-mediated decay pathway of mRNAs containing premature stop codons. In Homo sapiens (Human), this protein is NBAS subunit of NRZ tethering complex.